Consider the following 218-residue polypeptide: Small ribosomal subunit protein uS3c (218 aa).

The KH type-2 domain maps to 47–118 (VYKNIRNSSN…KLRMTLTEVT (72 aa)).

This sequence belongs to the universal ribosomal protein uS3 family. In terms of assembly, part of the 30S ribosomal subunit.

Its subcellular location is the plastid. It is found in the chloroplast. The sequence is that of Small ribosomal subunit protein uS3c (rps3) from Physcomitrium patens (Spreading-leaved earth moss).